The following is a 267-amino-acid chain: Putative methylsterol monooxygenase DDB_G0270946 (267 aa).

Transmembrane regions (helical) follow at residues 31 to 51 (FIAHQVFYFGCFIPFLIADFI), 72 to 92 (YCAIKVILTQVLIQLPMMYIF), and 110 to 130 (IPYLLLTLVSSFIIEDFYFYW). The 131-residue stretch at 119–249 (SSFIIEDFYF…FTYLDKIFGT (131 aa)) folds into the Fatty acid hydroxylase domain. Positions 132 to 136 (HRALH) match the Histidine box-1 motif. Positions 145-149 (HKVHH) match the Histidine box-2 motif. Positions 224-230 (FHDYHHE) match the Histidine box-3 motif.

The protein belongs to the sterol desaturase family. Fe cation serves as cofactor.

It is found in the endoplasmic reticulum membrane. The catalysed reaction is 4,4-dimethyl-5alpha-cholest-7-en-3beta-ol + 6 Fe(II)-[cytochrome b5] + 3 O2 + 5 H(+) = 4alpha-carboxy-4beta-methyl-5alpha-cholest-7-ene-3beta-ol + 6 Fe(III)-[cytochrome b5] + 4 H2O. It functions in the pathway steroid biosynthesis; zymosterol biosynthesis; zymosterol from lanosterol: step 3/6. The protein is Putative methylsterol monooxygenase DDB_G0270946 of Dictyostelium discoideum (Social amoeba).